Here is a 102-residue protein sequence, read N- to C-terminus: Small ribosomal subunit protein uS10 (102 aa).

It belongs to the universal ribosomal protein uS10 family. In terms of assembly, part of the 30S ribosomal subunit.

Involved in the binding of tRNA to the ribosomes. This is Small ribosomal subunit protein uS10 from Clavibacter michiganensis subsp. michiganensis (strain NCPPB 382).